The primary structure comprises 102 residues: Large ribosomal subunit protein bL21 (102 aa).

It belongs to the bacterial ribosomal protein bL21 family. In terms of assembly, part of the 50S ribosomal subunit. Contacts protein L20.

Functionally, this protein binds to 23S rRNA in the presence of protein L20. This is Large ribosomal subunit protein bL21 from Bifidobacterium animalis subsp. lactis (strain AD011).